The sequence spans 163 residues: NADH-quinone oxidoreductase subunit I (163 aa).

4Fe-4S ferredoxin-type domains follow at residues L54–H84 and T94–L123. [4Fe-4S] cluster is bound by residues C64, C67, C70, C74, C103, C106, C109, and C113.

It belongs to the complex I 23 kDa subunit family. As to quaternary structure, NDH-1 is composed of 14 different subunits. Subunits NuoA, H, J, K, L, M, N constitute the membrane sector of the complex. [4Fe-4S] cluster is required as a cofactor.

The protein resides in the cell inner membrane. It carries out the reaction a quinone + NADH + 5 H(+)(in) = a quinol + NAD(+) + 4 H(+)(out). Functionally, NDH-1 shuttles electrons from NADH, via FMN and iron-sulfur (Fe-S) centers, to quinones in the respiratory chain. The immediate electron acceptor for the enzyme in this species is believed to be ubiquinone. Couples the redox reaction to proton translocation (for every two electrons transferred, four hydrogen ions are translocated across the cytoplasmic membrane), and thus conserves the redox energy in a proton gradient. The polypeptide is NADH-quinone oxidoreductase subunit I (Halorhodospira halophila (strain DSM 244 / SL1) (Ectothiorhodospira halophila (strain DSM 244 / SL1))).